A 153-amino-acid polypeptide reads, in one-letter code: 3-hydroxyacyl-[acyl-carrier-protein] dehydratase FabZ (153 aa).

The active site involves H57.

It belongs to the thioester dehydratase family. FabZ subfamily.

Its subcellular location is the cytoplasm. It catalyses the reaction a (3R)-hydroxyacyl-[ACP] = a (2E)-enoyl-[ACP] + H2O. Its function is as follows. Involved in unsaturated fatty acids biosynthesis. Catalyzes the dehydration of short chain beta-hydroxyacyl-ACPs and long chain saturated and unsaturated beta-hydroxyacyl-ACPs. In Xanthomonas oryzae pv. oryzae (strain MAFF 311018), this protein is 3-hydroxyacyl-[acyl-carrier-protein] dehydratase FabZ.